The sequence spans 213 residues: Orotate phosphoribosyltransferase (213 aa).

Lys26 serves as a coordination point for 5-phospho-alpha-D-ribose 1-diphosphate. 34 to 35 (FF) contacts orotate. Residues 72–73 (YK), Arg98, Lys99, Lys102, and 123–131 (DDVISAGTS) each bind 5-phospho-alpha-D-ribose 1-diphosphate. Orotate is bound by residues Ser127 and Arg155.

The protein belongs to the purine/pyrimidine phosphoribosyltransferase family. PyrE subfamily. In terms of assembly, homodimer. The cofactor is Mg(2+).

The enzyme catalyses orotidine 5'-phosphate + diphosphate = orotate + 5-phospho-alpha-D-ribose 1-diphosphate. It functions in the pathway pyrimidine metabolism; UMP biosynthesis via de novo pathway; UMP from orotate: step 1/2. In terms of biological role, catalyzes the transfer of a ribosyl phosphate group from 5-phosphoribose 1-diphosphate to orotate, leading to the formation of orotidine monophosphate (OMP). In Neisseria gonorrhoeae (strain NCCP11945), this protein is Orotate phosphoribosyltransferase.